The primary structure comprises 135 residues: Large ribosomal subunit protein mL61 (135 aa).

Positions histidine 114–aspartate 129 are enriched in basic and acidic residues. The tract at residues histidine 114–asparagine 135 is disordered.

The protein belongs to the mitochondrion-specific ribosomal protein mL61 family. In terms of assembly, component of the mitochondrial large ribosomal subunit (mt-LSU). Mature yeast 74S mitochondrial ribosomes consist of a small (37S) and a large (54S) subunit. The 37S small subunit contains a 15S ribosomal RNA (15S mt-rRNA) and at least 32 different proteins. The 54S large subunit contains a 21S rRNA (21S mt-rRNA) and at least 45 different proteins.

It is found in the mitochondrion. In terms of biological role, component of the mitochondrial ribosome (mitoribosome), a dedicated translation machinery responsible for the synthesis of mitochondrial genome-encoded proteins, including at least some of the essential transmembrane subunits of the mitochondrial respiratory chain. The mitoribosomes are attached to the mitochondrial inner membrane and translation products are cotranslationally integrated into the membrane. mL61 is not essential in cells grown at 30 degrees Celsius but is required for mitochondrial translation in cells grown at 18 degrees Celsius. The sequence is that of Large ribosomal subunit protein mL61 (mrp49) from Schizosaccharomyces pombe (strain 972 / ATCC 24843) (Fission yeast).